We begin with the raw amino-acid sequence, 313 residues long: Acetyl-coenzyme A carboxylase carboxyl transferase subunit beta (313 aa).

The 270-residue stretch at 24–293 (LWIKCPDSGQ…LETASKSVQP (270 aa)) folds into the CoA carboxyltransferase N-terminal domain.

Belongs to the AccD/PCCB family. Acetyl-CoA carboxylase is a heterohexamer composed of biotin carboxyl carrier protein (AccB), biotin carboxylase (AccC) and two subunits each of ACCase subunit alpha (AccA) and ACCase subunit beta (AccD).

It is found in the cytoplasm. It carries out the reaction N(6)-carboxybiotinyl-L-lysyl-[protein] + acetyl-CoA = N(6)-biotinyl-L-lysyl-[protein] + malonyl-CoA. It functions in the pathway lipid metabolism; malonyl-CoA biosynthesis; malonyl-CoA from acetyl-CoA: step 1/1. Component of the acetyl coenzyme A carboxylase (ACC) complex. Biotin carboxylase (BC) catalyzes the carboxylation of biotin on its carrier protein (BCCP) and then the CO(2) group is transferred by the transcarboxylase to acetyl-CoA to form malonyl-CoA. This is Acetyl-coenzyme A carboxylase carboxyl transferase subunit beta from Bradyrhizobium diazoefficiens (strain JCM 10833 / BCRC 13528 / IAM 13628 / NBRC 14792 / USDA 110).